Reading from the N-terminus, the 386-residue chain is Caspase-1-A (386 aa).

Positions 1-100 (MTAQLNKVRR…PPMAPVPIQE (100 aa)) are excised as a propeptide. In terms of domain architecture, CARD spans 22–88 (SDLLDDLREK…HKTLAKSLGL (67 aa)). Residues H218 and C274 contribute to the active site. A propeptide spanning residues 287 to 296 (DVASPPLEDD) is cleaved from the precursor.

This sequence belongs to the peptidase C14A family. As to quaternary structure, heterotetramer that consists of two anti-parallel arranged heterodimers, each one formed by a 20 kDa (Caspase-1 subunit p20) and a 10 kDa (Caspase-1 subunit p10) subunit. In terms of assembly, heterotetramer that consists of two anti-parallel arranged heterodimers, each one formed by a 20 kDa (Caspase-1 subunit p20) and a 10 kDa (Caspase-1 subunit p10) subunit. Can form a heterodimer with isoform epsilon which then has an inhibitory effect. In terms of processing, the two subunits are derived from the precursor sequence by an autocatalytic mechanism.

Its subcellular location is the cytoplasm. It localises to the cell membrane. It catalyses the reaction Strict requirement for an Asp residue at position P1 and has a preferred cleavage sequence of Tyr-Val-Ala-Asp-|-.. Its function is as follows. Thiol protease involved in a variety of inflammatory processes by proteolytically cleaving other proteins, such as the precursors of the inflammatory cytokines interleukin-1 beta (IL1B) and interleukin 18 (IL18) as well as the pyroptosis inducer Gasdermin-D (GSDMD), into active mature peptides. Plays a key role in cell immunity as an inflammatory response initiator: once activated through formation of an inflammasome complex, it initiates a pro-inflammatory response through the cleavage of the two inflammatory cytokines IL1B and IL18, releasing the mature cytokines which are involved in a variety of inflammatory processes. Cleaves a tetrapeptide after an Asp residue at position P1. Also initiates pyroptosis, a programmed lytic cell death pathway, through cleavage of GSDMD. This Xenopus laevis (African clawed frog) protein is Caspase-1-A (casp1-a).